Here is a 250-residue protein sequence, read N- to C-terminus: DNA repair protein RecO (250 aa).

It belongs to the RecO family.

Involved in DNA repair and RecF pathway recombination. The chain is DNA repair protein RecO from Rhodopseudomonas palustris (strain ATCC BAA-98 / CGA009).